A 131-amino-acid polypeptide reads, in one-letter code: Tegument protein ORF52 (131 aa).

The segment at 103 to 131 (SDGGTAKPPPGANNRRRRGASTTRAGVDD) is disordered. Residues 122–131 (ASTTRAGVDD) show a composition bias toward low complexity. S123 is subject to Phosphoserine; by host.

It belongs to the herpesviridae BLRF2 family. In terms of assembly, homooligomer; homooligomerizes and binds double-stranded DNA (dsDNA) cooperatively. Interacts with host CGAS. Interacts with PQBP1.

It is found in the host cytoplasm. It localises to the virion tegument. Functionally, plays a role in the inhibition of host innate immune system by targeting the CGAS enzymatic activity which is the principal cytosolic DNA sensor that detects invading viral DNA. Acts by inhibiting CGAS-DNA phase separation: directly binds double-stranded DNA (dsDNA) in a length dependent but sequence independent manner and is able to form DNA-induced phase separation in infected cells. DNA phase separation of ORF52 mediates disruption of liquid-like droplets in which CGAS is activated, thereby preventing CGAS activity. Targets also the HDP-RNP complex composed of DNA-PK subunits and paraspeckle proteins. This complex is a key nuclear regulator of DNA-mediated activation of innate immune response through the cGAS-STING pathway. This is Tegument protein ORF52 from Homo sapiens (Human).